The chain runs to 204 residues: Large ribosomal subunit protein uL18 (204 aa).

This sequence belongs to the universal ribosomal protein uL18 family. Part of the 50S ribosomal subunit. Contacts the 5S and 23S rRNAs.

This is one of the proteins that bind and probably mediate the attachment of the 5S RNA into the large ribosomal subunit, where it forms part of the central protuberance. The polypeptide is Large ribosomal subunit protein uL18 (Ignicoccus hospitalis (strain KIN4/I / DSM 18386 / JCM 14125)).